A 243-amino-acid chain; its full sequence is Ice-binding protein K3-B1 (243 aa).

The signal sequence occupies residues Met1–Ala20.

It belongs to the ice-binding protein family.

In terms of biological role, binds to the surface of ice crystals. Has low thermal hysteresis (TH) activity, which is the ability to lower the freezing point of an aqueous solution below its melting point. The TH activity of this protein is approximately 0.3 degrees Celsius at 11 mM. The protein is Ice-binding protein K3-B1 of Typhula ishikariensis (Gray snow mold fungus).